A 525-amino-acid polypeptide reads, in one-letter code: NAD(P)H-quinone oxidoreductase chain 4-1 (525 aa).

The next 14 membrane-spanning stretches (helical) occupy residues 4–24, 37–57, 89–109, 111–131, 134–154, 167–187, 210–230, 241–261, 273–293, 309–329, 330–350, 385–405, 416–436, and 462–482; these read FPWL…IPII, LAVG…GFDL, LIIL…PVTL, PKLF…VFAV, ILLF…ILSI, FILY…TLAF, LLLY…FPLH, TAPA…YALL, AVFA…AAFT, ISHM…GMSG, AMLQ…MVGA, LALP…GFAT, IVVV…LSML, and VFII…PKLI.

This sequence belongs to the complex I subunit 4 family.

The protein localises to the cellular thylakoid membrane. It carries out the reaction a plastoquinone + NADH + (n+1) H(+)(in) = a plastoquinol + NAD(+) + n H(+)(out). It catalyses the reaction a plastoquinone + NADPH + (n+1) H(+)(in) = a plastoquinol + NADP(+) + n H(+)(out). Functionally, NDH-1 shuttles electrons from NAD(P)H, via FMN and iron-sulfur (Fe-S) centers, to quinones in the respiratory chain. The immediate electron acceptor for the enzyme in this species is believed to be plastoquinone. Couples the redox reaction to proton translocation (for every two electrons transferred, four hydrogen ions are translocated across the cytoplasmic membrane), and thus conserves the redox energy in a proton gradient. This is NAD(P)H-quinone oxidoreductase chain 4-1 (ndhD1) from Synechocystis sp. (strain ATCC 27184 / PCC 6803 / Kazusa).